The primary structure comprises 926 residues: Peripheral plasma membrane protein CASK (926 aa).

Positions 12-276 constitute a Protein kinase domain; it reads YELCEVIGKG…VYEALNHPWL (265 aa). Residues 18-26 and lysine 41 each bind ATP; that span reads IGKGPFSVV. At serine 51 the chain carries Phosphoserine. Aspartate 141 is an active-site residue. Serine 151 and serine 155 each carry phosphoserine; by autocatalysis. Residue threonine 182 is modified to Phosphothreonine. Residues 305 to 315 form a calmodulin-binding region; it reads KGAVLAAVSSH. Serine 313 is subject to Phosphoserine. 2 L27 domains span residues 343 to 398 and 402 to 455; these read AERA…SPQI and PSDA…YSDE. Residues 482-909 are required for interaction with NRXN1 (via C-terminal tail); it reads MENVTRVRLV…DETIRHLEEA (428 aa). In terms of domain architecture, PDZ spans 490-571; that stretch reads LVQFQKNTDE…SITFKIVPSY (82 aa). A phosphoserine mark is found at serine 570 and tyrosine 571. A disordered region spans residues 574 to 610; sequence QSSSCERDSPSTSRQSPANGHSSTNNSVSDLPSTTQP. In terms of domain architecture, SH3 spans 612–682; it reads GRQIYVRAQF…PSPELQEWRV (71 aa). The 173-residue stretch at 739–911 folds into the Guanylate kinase-like domain; that stretch reads RKTLVLLGAH…TIRHLEEAVE (173 aa).

In the N-terminal section; belongs to the protein kinase superfamily. CAMK Ser/Thr protein kinase family. CaMK subfamily. This sequence belongs to the MAGUK family. In terms of assembly, CASK and LIN7 form a tripartite complex with CASKIN1. Component of the brain-specific heterotrimeric complex (LIN-10-LIN-2-LIN-7 complex) composed of at least APBA1, CASK, and LIN7, which associates with the motor protein KIF17 to transport vesicles along microtubules. Forms a heterotrimeric complex with DLG1 and LIN7B via their L27 domains. Identified in a complex with ACTN4, IQGAP1, MAGI2, NPHS1, SPTAN1 and SPTBN1. Part of a complex containing CASK, TBR1 and TSPYL2. Interacts with WHRN. Interacts (via the PDZ, SH3 and guanylate kinase-like domains) with NRXN1 (via C-terminus). Interacts with CASKIN1, APBA1, LIN7(A/B/C), and L27 domain of DLG1 and isoform 2 of DLG4. Interacts with FCHSD2. Interacts with KIRREL3. Interacts with TBR1. Interacts with TSPYL2. Unlike other protein kinases, does not require a divalent cation such as magnesium for catalytic activity. serves as cofactor.

The protein localises to the nucleus. It is found in the cytoplasm. Its subcellular location is the cell membrane. The catalysed reaction is L-seryl-[protein] + ATP = O-phospho-L-seryl-[protein] + ADP + H(+). It catalyses the reaction L-threonyl-[protein] + ATP = O-phospho-L-threonyl-[protein] + ADP + H(+). With respect to regulation, differs from archetypal CaMK members in that the kinase domain exhibits a constitutively active conformation and the autoinhibitory region does not engage in direct contact with the ATP-binding cleft, although it still binds Ca(2+)/CAM. Its function is as follows. Multidomain scaffolding Mg(2+)-independent protein kinase that catalyzes the phosphotransfer from ATP to proteins such as NRXN1, and plays a role in synaptic transmembrane protein anchoring and ion channel trafficking. Contributes to neural development and regulation of gene expression via interaction with the transcription factor TBR1. Binds to cell-surface proteins, including amyloid precursor protein, neurexins, and syndecans. May mediate a link between the extracellular matrix and the actin cytoskeleton via its interaction with syndecan and with the actin/spectrin-binding protein 4.1. Component of the LIN-10-LIN-2-LIN-7 complex, which associates with the motor protein KIF17 to transport vesicles containing N-methyl-D-aspartate (NMDA) receptor subunit NR2B along microtubules. The protein is Peripheral plasma membrane protein CASK of Mus musculus (Mouse).